The chain runs to 326 residues: tRNA(Ile)-lysidine synthase (326 aa).

23–28 (SGGVDS) contacts ATP.

The protein belongs to the tRNA(Ile)-lysidine synthase family.

The protein resides in the cytoplasm. The enzyme catalyses cytidine(34) in tRNA(Ile2) + L-lysine + ATP = lysidine(34) in tRNA(Ile2) + AMP + diphosphate + H(+). Ligates lysine onto the cytidine present at position 34 of the AUA codon-specific tRNA(Ile) that contains the anticodon CAU, in an ATP-dependent manner. Cytidine is converted to lysidine, thus changing the amino acid specificity of the tRNA from methionine to isoleucine. The polypeptide is tRNA(Ile)-lysidine synthase (Wolinella succinogenes (strain ATCC 29543 / DSM 1740 / CCUG 13145 / JCM 31913 / LMG 7466 / NCTC 11488 / FDC 602W) (Vibrio succinogenes)).